Consider the following 823-residue polypeptide: Aminopeptidase O (823 aa).

His-481 contacts Zn(2+). Glu-482 (proton acceptor) is an active-site residue. Positions 485 and 504 each coordinate Zn(2+). Residues Arg-693–Arg-703 carry the Nucleolar localization signal motif.

It belongs to the peptidase M1 family. Zn(2+) is required as a cofactor. As to expression, expressed in testis, heart, brain, lung, liver, skeletal muscle, kidney and ovary. Expressed in vascular tissues.

Its subcellular location is the nucleus. It is found in the nucleolus. It localises to the cytoplasm. Functionally, aminopeptidase which catalyzes the hydrolysis of amino acid residues from the N-terminus of peptide or protein substrates. The polypeptide is Aminopeptidase O (Aopep) (Mus musculus (Mouse)).